Here is a 329-residue protein sequence, read N- to C-terminus: Glycerol-3-phosphate dehydrogenase [NAD(P)+] (329 aa).

Residues Trp15, His35, and Lys107 each contribute to the NADPH site. Sn-glycerol 3-phosphate is bound by residues Lys107, Gly135, and Ser137. NADPH is bound at residue Ala139. 5 residues coordinate sn-glycerol 3-phosphate: Lys190, Asp243, Ser253, Arg254, and Asn255. Residue Lys190 is the Proton acceptor of the active site. Arg254 lines the NADPH pocket. The NADPH site is built by Leu276 and Glu278.

This sequence belongs to the NAD-dependent glycerol-3-phosphate dehydrogenase family.

It localises to the cytoplasm. It catalyses the reaction sn-glycerol 3-phosphate + NAD(+) = dihydroxyacetone phosphate + NADH + H(+). The enzyme catalyses sn-glycerol 3-phosphate + NADP(+) = dihydroxyacetone phosphate + NADPH + H(+). It participates in membrane lipid metabolism; glycerophospholipid metabolism. In terms of biological role, catalyzes the reduction of the glycolytic intermediate dihydroxyacetone phosphate (DHAP) to sn-glycerol 3-phosphate (G3P), the key precursor for phospholipid synthesis. The protein is Glycerol-3-phosphate dehydrogenase [NAD(P)+] of Rhodopseudomonas palustris (strain BisB5).